A 240-amino-acid polypeptide reads, in one-letter code: Uridylate kinase (240 aa).

12 to 15 (KLSG) contributes to the ATP binding site. The segment at 20-25 (GKQGFG) is involved in allosteric activation by GTP. Gly54 is a UMP binding site. The ATP site is built by Gly55 and Arg59. Residues Asp74 and 135 to 142 (TGNPYFST) each bind UMP. Residues Asn163, Tyr169, and Asp172 each contribute to the ATP site.

Belongs to the UMP kinase family. As to quaternary structure, homohexamer.

The protein resides in the cytoplasm. The enzyme catalyses UMP + ATP = UDP + ADP. Its pathway is pyrimidine metabolism; CTP biosynthesis via de novo pathway; UDP from UMP (UMPK route): step 1/1. Allosterically activated by GTP. Inhibited by UTP. Its function is as follows. Catalyzes the reversible phosphorylation of UMP to UDP. The sequence is that of Uridylate kinase from Geobacillus thermodenitrificans (strain NG80-2).